Here is a 226-residue protein sequence, read N- to C-terminus: Large ribosomal subunit protein uL1 (226 aa).

This sequence belongs to the universal ribosomal protein uL1 family. In terms of assembly, part of the 50S ribosomal subunit.

Its function is as follows. Binds directly to 23S rRNA. The L1 stalk is quite mobile in the ribosome, and is involved in E site tRNA release. Functionally, protein L1 is also a translational repressor protein, it controls the translation of the L11 operon by binding to its mRNA. The chain is Large ribosomal subunit protein uL1 from Mycoplasma capricolum subsp. capricolum (strain California kid / ATCC 27343 / NCTC 10154).